Reading from the N-terminus, the 428-residue chain is Adenylosuccinate synthetase (428 aa).

GTP-binding positions include 11–17 (GDEGKGK) and 39–41 (GHT). Aspartate 12 functions as the Proton acceptor in the catalytic mechanism. Mg(2+) contacts are provided by aspartate 12 and glycine 39. IMP-binding positions include 12 to 15 (DEGK), 37 to 40 (NAGH), threonine 130, arginine 144, asparagine 226, threonine 241, and arginine 305. The active-site Proton donor is histidine 40. Residue 301-307 (VTTGRKR) participates in substrate binding. GTP is bound by residues arginine 307, 333–335 (KLD), and 415–417 (GTG).

Belongs to the adenylosuccinate synthetase family. Homodimer. It depends on Mg(2+) as a cofactor.

It localises to the cytoplasm. The enzyme catalyses IMP + L-aspartate + GTP = N(6)-(1,2-dicarboxyethyl)-AMP + GDP + phosphate + 2 H(+). The protein operates within purine metabolism; AMP biosynthesis via de novo pathway; AMP from IMP: step 1/2. Functionally, plays an important role in the de novo pathway and in the salvage pathway of purine nucleotide biosynthesis. Catalyzes the first committed step in the biosynthesis of AMP from IMP. In Candida albicans (strain SC5314 / ATCC MYA-2876) (Yeast), this protein is Adenylosuccinate synthetase.